Consider the following 434-residue polypeptide: Enolase (434 aa).

Residue glutamine 163 coordinates (2R)-2-phosphoglycerate. Glutamate 205 (proton donor) is an active-site residue. Mg(2+) is bound by residues aspartate 242, glutamate 291, and aspartate 318. (2R)-2-phosphoglycerate-binding residues include lysine 343, arginine 372, serine 373, and lysine 394. Residue lysine 343 is the Proton acceptor of the active site.

It belongs to the enolase family. It depends on Mg(2+) as a cofactor.

It is found in the cytoplasm. The protein localises to the secreted. Its subcellular location is the cell surface. It carries out the reaction (2R)-2-phosphoglycerate = phosphoenolpyruvate + H2O. It participates in carbohydrate degradation; glycolysis; pyruvate from D-glyceraldehyde 3-phosphate: step 4/5. Functionally, catalyzes the reversible conversion of 2-phosphoglycerate (2-PG) into phosphoenolpyruvate (PEP). It is essential for the degradation of carbohydrates via glycolysis. This chain is Enolase, found in Streptococcus thermophilus (strain CNRZ 1066).